The chain runs to 179 residues: Large ribosomal subunit protein uL5 (179 aa).

This sequence belongs to the universal ribosomal protein uL5 family. Part of the 50S ribosomal subunit; part of the 5S rRNA/L5/L18/L25 subcomplex. Contacts the 5S rRNA and the P site tRNA. Forms a bridge to the 30S subunit in the 70S ribosome.

Functionally, this is one of the proteins that bind and probably mediate the attachment of the 5S RNA into the large ribosomal subunit, where it forms part of the central protuberance. In the 70S ribosome it contacts protein S13 of the 30S subunit (bridge B1b), connecting the 2 subunits; this bridge is implicated in subunit movement. Contacts the P site tRNA; the 5S rRNA and some of its associated proteins might help stabilize positioning of ribosome-bound tRNAs. In Pseudomonas putida (strain W619), this protein is Large ribosomal subunit protein uL5.